The sequence spans 227 residues: ATP-dependent Clp protease proteolytic subunit 1 (227 aa).

The Nucleophile role is filled by Ser-124. Residue His-149 is part of the active site.

The protein belongs to the peptidase S14 family. As to quaternary structure, fourteen ClpP subunits assemble into 2 heptameric rings which stack back to back to give a disk-like structure with a central cavity, resembling the structure of eukaryotic proteasomes.

Its subcellular location is the cytoplasm. It carries out the reaction Hydrolysis of proteins to small peptides in the presence of ATP and magnesium. alpha-casein is the usual test substrate. In the absence of ATP, only oligopeptides shorter than five residues are hydrolyzed (such as succinyl-Leu-Tyr-|-NHMec, and Leu-Tyr-Leu-|-Tyr-Trp, in which cleavage of the -Tyr-|-Leu- and -Tyr-|-Trp bonds also occurs).. In terms of biological role, cleaves peptides in various proteins in a process that requires ATP hydrolysis. Has a chymotrypsin-like activity. Plays a major role in the degradation of misfolded proteins. This Rhodopirellula baltica (strain DSM 10527 / NCIMB 13988 / SH1) protein is ATP-dependent Clp protease proteolytic subunit 1.